A 771-amino-acid chain; its full sequence is Choline transporter-like protein 1 (771 aa).

Residues 96–116 (FLFFVFLCGWVVVAGFGIMWG) traverse the membrane as a helical segment. Asn141 and Asn259 each carry an N-linked (GlcNAc...) asparagine glycan. 4 helical membrane-spanning segments follow: residues 312–332 (WWQT…WTVI), 335–355 (LLGS…LGFG), 392–412 (LVVA…ILFI), and 441–461 (LFPF…AIWL). An N-linked (GlcNAc...) asparagine glycan is attached at Asn480. 5 helical membrane-spanning segments follow: residues 514–534 (LFAF…ALAG), 566–586 (LGSI…RVLL), 603–623 (WFLM…KFLT), 662–682 (AGIL…ILSF), and 701–721 (YYFV…DLFF).

Belongs to the CTL (choline transporter-like) family.

The protein resides in the membrane. This is Choline transporter-like protein 1 (chtl-1) from Caenorhabditis elegans.